A 211-amino-acid chain; its full sequence is Eukaryotic translation initiation factor 4E (211 aa).

Belongs to the eukaryotic initiation factor 4E family. EIF4F is a multi-subunit complex, the composition of which varies with external and internal environmental conditions. It is composed of at least eIF4A, eIF4E and eIF4G. eIF4E is also known to interact with other partners.

In terms of biological role, recognizes and binds the 7-methylguanosine-containing mRNA cap during an early step in the initiation of protein synthesis and facilitates ribosome binding by inducing the unwinding of the mRNAs secondary structures. This is Eukaryotic translation initiation factor 4E (TIF45) from Eremothecium gossypii (strain ATCC 10895 / CBS 109.51 / FGSC 9923 / NRRL Y-1056) (Yeast).